The following is a 547-amino-acid chain: uncharacterized protein (547 aa).

It to B.subtilis RocB.

This is an uncharacterized protein from Bacillus subtilis (strain 168).